The sequence spans 208 residues: Imidazoleglycerol-phosphate dehydratase (208 aa).

This sequence belongs to the imidazoleglycerol-phosphate dehydratase family.

Its subcellular location is the cytoplasm. The enzyme catalyses D-erythro-1-(imidazol-4-yl)glycerol 3-phosphate = 3-(imidazol-4-yl)-2-oxopropyl phosphate + H2O. Its pathway is amino-acid biosynthesis; L-histidine biosynthesis; L-histidine from 5-phospho-alpha-D-ribose 1-diphosphate: step 6/9. The protein is Imidazoleglycerol-phosphate dehydratase of Paenarthrobacter aurescens (strain TC1).